We begin with the raw amino-acid sequence, 380 residues long: Kappa-type opioid receptor (380 aa).

Over 1-57 the chain is Extracellular; the sequence is MESPIQIFRGDPGPTCSPSACLLPNSSSWFPNWAESDSNGSVGSEDQQLESAHISPA. 2 N-linked (GlcNAc...) asparagine glycosylation sites follow: Asn-25 and Asn-39. The helical transmembrane segment at 58–85 threads the bilayer; the sequence is IPVIITAVYSVVFVVGLVGNSLVMFVII. Over 86–95 the chain is Cytoplasmic; the sequence is RYTKMKTATN. The chain crosses the membrane as a helical span at residues 96–119; that stretch reads IYIFNLALADALVTTTMPFQSAVY. Residues 120–132 are Extracellular-facing; the sequence is LMNSWPFGDVLCK. A disulfide bridge connects residues Cys-131 and Cys-210. The helical transmembrane segment at 133–154 threads the bilayer; it reads IVISIDYYNMFTSIFTLTMMSV. The Cytoplasmic portion of the chain corresponds to 155–173; the sequence is DRYIAVCHPVKALDFRTPL. Residues 174 to 196 traverse the membrane as a helical segment; the sequence is KAKIINICIWLLASSVGISAIVL. Residues 197–222 are Extracellular-facing; sequence GGTKVREDVDVIECSLQFPDDEYSWW. A helical membrane pass occupies residues 223-247; the sequence is DLFMKICVFVFAFVIPVLIIIVCYT. Residues 248-274 are Cytoplasmic-facing; sequence LMILRLKSVRLLSGSREKDRNLRRITK. A helical membrane pass occupies residues 275 to 296; the sequence is LVLVVVAVFIICWTPIHIFILV. Residues 297 to 311 are Extracellular-facing; the sequence is EALGSTSHSTAALSS. The chain crosses the membrane as a helical span at residues 312-333; that stretch reads YYFCIALGYTNSSLNPVLYAFL. The Cytoplasmic segment spans residues 334-380; that stretch reads DENFKRCFRDFCFPIKMRMERQSTNRVRNTVQDPASMRDVGGMNKPV. A lipid anchor (S-palmitoyl cysteine) is attached at Cys-345.

Belongs to the G-protein coupled receptor 1 family. Interacts with NHERF1. Interacts with GABARAPL1. In terms of tissue distribution, detected in brain (at protein level). Brain (neocortex, hippocampus, amygdala, medial habenula, hypothalamus, locus ceruleus, and parabrachial nucleus).

It localises to the cell membrane. G-protein coupled opioid receptor that functions as a receptor for endogenous alpha-neoendorphins and dynorphins, but has low affinity for beta-endorphins. Also functions as a receptor for various synthetic opioids and for the psychoactive diterpene salvinorin A. Ligand binding causes a conformation change that triggers signaling via guanine nucleotide-binding proteins (G proteins) and modulates the activity of down-stream effectors, such as adenylate cyclase. Signaling leads to the inhibition of adenylate cyclase activity. Inhibits neurotransmitter release by reducing calcium ion currents and increasing potassium ion conductance. Plays a role in the perception of pain. Plays a role in mediating reduced physical activity upon treatment with synthetic opioids. Plays a role in the regulation of salivation in response to synthetic opioids. May play a role in arousal and regulation of autonomic and neuroendocrine functions. In Mus musculus (Mouse), this protein is Kappa-type opioid receptor (Oprk1).